The primary structure comprises 923 residues: RNA polymerase-associated protein RapA (923 aa).

The Helicase ATP-binding domain occupies 162 to 332 (EVGNRVNPRV…FARLRLLDPE (171 aa)). 175-182 (DEVGLGKT) serves as a coordination point for ATP. A DEAH box motif is present at residues 278–281 (DEAH). The Helicase C-terminal domain occupies 443–597 (KIDWLIDFLK…TCPMGMALFS (155 aa)).

The protein belongs to the SNF2/RAD54 helicase family. RapA subfamily. As to quaternary structure, interacts with the RNAP. Has a higher affinity for the core RNAP than for the holoenzyme. Its ATPase activity is stimulated by binding to RNAP.

In terms of biological role, transcription regulator that activates transcription by stimulating RNA polymerase (RNAP) recycling in case of stress conditions such as supercoiled DNA or high salt concentrations. Probably acts by releasing the RNAP, when it is trapped or immobilized on tightly supercoiled DNA. Does not activate transcription on linear DNA. Probably not involved in DNA repair. This is RNA polymerase-associated protein RapA from Haemophilus influenzae (strain PittEE).